The following is a 425-amino-acid chain: Pectate lyase L (425 aa).

Positions 1-25 are cleaved as a signal peptide; that stretch reads MKYLNCFISTGLAAFFLVNSTSVLA. Residues Cys28 and Cys114 are joined by a disulfide bond. Ca(2+)-binding residues include Asp209, Asp233, Asp234, and Asp237. Catalysis depends on Lys273, which acts as the Proton acceptor. Positions 402, 413, 416, 418, and 423 each coordinate Ca(2+).

The protein belongs to the polysaccharide lyase 9 family. The cofactor is Ca(2+).

Its subcellular location is the secreted. The enzyme catalyses Eliminative cleavage of (1-&gt;4)-alpha-D-galacturonan to give oligosaccharides with 4-deoxy-alpha-D-galact-4-enuronosyl groups at their non-reducing ends.. It functions in the pathway glycan metabolism; pectin degradation; 2-dehydro-3-deoxy-D-gluconate from pectin: step 2/5. Its function is as follows. Presents an endo-cleaving activity on polygalacturonate or partially methylated pectin. The protein is Pectate lyase L (pelL) of Dickeya chrysanthemi (Pectobacterium chrysanthemi).